The following is a 682-amino-acid chain: MSRKQLALFEPVLLVQALTDAVKKLSPRAQWRNPVMFVVWAGSVLTTLLTLAMVTGQIAGSALFTGVISLWLWFTVLFANFAEALAEGRSKAQANSLKGVKKTAFARRLRAPRHDAQADNVPAAELRKGDIVLVKAGDIIPCDGEVIEGGASVDESAITGESAPVIRESGGDFASVTGGTRILSDWLVIACSVNPGETFLDRMIAMVEGAQRRKTPNEIALTILLIALTIVFLLATATLWPFSAWGGNAVSVTVLVALLVCLIPTTIGGLLSAIGVAGMSRMLGANVIATSGRAVEAAGDVDVLLLDKTGTITLGNRQASDFIPARGVDERALADAAQLASLADETPEGRSIVILAKQRFNLRERDMQSLHATFVPFTAQSRMSGINIDNRMIRKGSVDAIRRHVESNGGHFPADVEQNVENVARLGATPLVVVEGARVLGVIALKDIVKGGIKERFAQLRKMGIKTVMITGDNRLTAAAIAAEAGVDDFLAEATPEAKLALIRQYQAEGRLVAMTGDGTNDAPALAQADVAVAMNSGTQAAKEAGNMVDLDSNPTKLIEVVHIGKQMLMTRGSLTTFSIANDVAKYFAIIPAAFAATYPQLNALNVMGLHSPNSAILSAVIFNALIIIFLIPLALKGVSYKPLSASAMLRRNLWIYGLGGLVVPFIGIKVIDVLLTLLGLA.

The next 4 helical transmembrane spans lie at Pro34–Val54, Ile58–Phe78, Ile219–Leu239, and Val254–Ile274. Catalysis depends on Asp307, which acts as the 4-aspartylphosphate intermediate. ATP is bound by residues Asp344, Glu348, Phe377–Ser384, and Lys395. Positions 518 and 522 each coordinate Mg(2+). The next 3 membrane-spanning stretches (helical) occupy residues Phe588 to Met608, Ala616 to Leu636, and Leu662 to Ala682.

It belongs to the cation transport ATPase (P-type) (TC 3.A.3) family. Type IA subfamily. The system is composed of three essential subunits: KdpA, KdpB and KdpC.

It is found in the cell inner membrane. The catalysed reaction is K(+)(out) + ATP + H2O = K(+)(in) + ADP + phosphate + H(+). In terms of biological role, part of the high-affinity ATP-driven potassium transport (or Kdp) system, which catalyzes the hydrolysis of ATP coupled with the electrogenic transport of potassium into the cytoplasm. This subunit is responsible for energy coupling to the transport system and for the release of the potassium ions to the cytoplasm. The sequence is that of Potassium-transporting ATPase ATP-binding subunit from Salmonella paratyphi A (strain ATCC 9150 / SARB42).